The primary structure comprises 520 residues: Probable E3 ubiquitin-protein ligase rbrA (520 aa).

Acidic residues predominate over residues 1 to 42 (MTDDEMYEDYDVDDDSAEESGNESLDDTEYDDAATQEFDFDE). The tract at residues 1 to 51 (MTDDEMYEDYDVDDDSAEESGNESLDDTEYDDAATQEFDFDENQPQRSLGK) is disordered. Positions 135–354 (GNVSCLICLE…GGYYNCNKYD (220 aa)) are TRIAD supradomain. Residues Cys-139, Cys-142, Cys-156, His-158, Cys-161, Cys-164, Cys-184, Cys-189, Cys-228, Cys-233, Cys-250, Cys-252, Cys-257, Cys-260, His-268, Cys-273, Cys-300, and Cys-303 each contribute to the Zn(2+) site. The RING-type 1 zinc-finger motif lies at 139-189 (CLICLEDYPPTQTFALICNHRYCLPCYKNYLEIKVSEGPECIYTPCPAPKC). Residues 208 to 273 (ERFNNFILKS…EIGDHMPCPC (66 aa)) form an IBR-type zinc finger. The segment at 300–333 (CPECRSPIEKNGGCMHMTCRKNAGGCGFEFCWLC) adopts an RING-type 2; atypical zinc-finger fold. The active site involves Cys-313. Zn(2+)-binding residues include Cys-318, Cys-325, Cys-330, Cys-333, His-340, and Cys-350.

Belongs to the RBR family.

It carries out the reaction [E2 ubiquitin-conjugating enzyme]-S-ubiquitinyl-L-cysteine + [acceptor protein]-L-lysine = [E2 ubiquitin-conjugating enzyme]-L-cysteine + [acceptor protein]-N(6)-ubiquitinyl-L-lysine.. It participates in protein modification; protein ubiquitination. Its function is as follows. Might act as an E3 ubiquitin-protein ligase. Appears to be required for normal cell-type proportioning and cell sorting during multicellular development. In addition to being necessary for a normal percentage of prestalk cells and the organization of the slug, rbrA is also necessary for spore cell viability. The protein is Probable E3 ubiquitin-protein ligase rbrA (rbrA) of Dictyostelium discoideum (Social amoeba).